We begin with the raw amino-acid sequence, 96 residues long: Non-specific lipid-transfer protein 2G (96 aa).

Residues 1-29 form the signal peptide; sequence MAGMMKKQVVTALMLALVVLAAAPGGARA. Intrachain disulfides connect Cys31–Cys63, Cys39–Cys53, Cys54–Cys89, and Cys65–Cys96.

The protein localises to the secreted. It localises to the cell wall. Transfer lipids across membranes. May play a role in plant defense or in the biosynthesis of cuticle layers. This is Non-specific lipid-transfer protein 2G from Triticum aestivum (Wheat).